Consider the following 343-residue polypeptide: Glyceraldehyde-3-phosphate dehydrogenase (343 aa).

Residues 13–14 and Gly111 contribute to the NAD(+) site; that span reads TI. Position 140 to 142 (140 to 142) interacts with D-glyceraldehyde 3-phosphate; sequence SCN. Catalysis depends on Cys141, which acts as the Nucleophile. Arg169 serves as a coordination point for NAD(+). 195 to 196 is a D-glyceraldehyde 3-phosphate binding site; sequence HA. An NAD(+)-binding site is contributed by Gln303.

It belongs to the glyceraldehyde-3-phosphate dehydrogenase family. As to quaternary structure, homotetramer.

It is found in the cytoplasm. It carries out the reaction D-glyceraldehyde 3-phosphate + phosphate + NADP(+) = (2R)-3-phospho-glyceroyl phosphate + NADPH + H(+). The enzyme catalyses D-glyceraldehyde 3-phosphate + phosphate + NAD(+) = (2R)-3-phospho-glyceroyl phosphate + NADH + H(+). It functions in the pathway carbohydrate degradation; glycolysis; pyruvate from D-glyceraldehyde 3-phosphate: step 1/5. The sequence is that of Glyceraldehyde-3-phosphate dehydrogenase from Sulfurisphaera tokodaii (strain DSM 16993 / JCM 10545 / NBRC 100140 / 7) (Sulfolobus tokodaii).